A 213-amino-acid polypeptide reads, in one-letter code: uncharacterized protein (213 aa).

Residues glycine 53, glutamate 74, and aspartate 96 each coordinate S-adenosyl-L-methionine.

Belongs to the methyltransferase superfamily. YrrT family.

Could be a S-adenosyl-L-methionine-dependent methyltransferase. This is an uncharacterized protein from Oceanobacillus iheyensis (strain DSM 14371 / CIP 107618 / JCM 11309 / KCTC 3954 / HTE831).